The chain runs to 293 residues: 33 kDa chaperonin (293 aa).

Disulfide bonds link cysteine 238/cysteine 240 and cysteine 271/cysteine 274.

The protein belongs to the HSP33 family. In terms of processing, under oxidizing conditions two disulfide bonds are formed involving the reactive cysteines. Under reducing conditions zinc is bound to the reactive cysteines and the protein is inactive.

It localises to the cytoplasm. Its function is as follows. Redox regulated molecular chaperone. Protects both thermally unfolding and oxidatively damaged proteins from irreversible aggregation. Plays an important role in the bacterial defense system toward oxidative stress. The chain is 33 kDa chaperonin from Staphylococcus epidermidis (strain ATCC 35984 / DSM 28319 / BCRC 17069 / CCUG 31568 / BM 3577 / RP62A).